Here is a 436-residue protein sequence, read N- to C-terminus: Methylenetetrahydrofolate--tRNA-(uracil-5-)-methyltransferase TrmFO (436 aa).

8 to 13 (GGGLAG) provides a ligand contact to FAD.

It belongs to the MnmG family. TrmFO subfamily. FAD is required as a cofactor.

It localises to the cytoplasm. The catalysed reaction is uridine(54) in tRNA + (6R)-5,10-methylene-5,6,7,8-tetrahydrofolate + NADH + H(+) = 5-methyluridine(54) in tRNA + (6S)-5,6,7,8-tetrahydrofolate + NAD(+). It catalyses the reaction uridine(54) in tRNA + (6R)-5,10-methylene-5,6,7,8-tetrahydrofolate + NADPH + H(+) = 5-methyluridine(54) in tRNA + (6S)-5,6,7,8-tetrahydrofolate + NADP(+). Its function is as follows. Catalyzes the folate-dependent formation of 5-methyl-uridine at position 54 (M-5-U54) in all tRNAs. In Syntrophomonas wolfei subsp. wolfei (strain DSM 2245B / Goettingen), this protein is Methylenetetrahydrofolate--tRNA-(uracil-5-)-methyltransferase TrmFO.